A 414-amino-acid polypeptide reads, in one-letter code: Putative dipeptidase ARB_02715 (414 aa).

The signal sequence occupies residues methionine 1–alanine 20. Zn(2+) is bound by residues histidine 45, aspartate 47, and glutamate 157. The cysteines at positions 96 and 186 are disulfide-linked. Histidine 184 provides a ligand contact to substrate. 2 residues coordinate Zn(2+): histidine 228 and histidine 249. Residues arginine 260 and aspartate 320 each contribute to the substrate site. N-linked (GlcNAc...) asparagine glycosylation is present at asparagine 392.

The protein belongs to the metallo-dependent hydrolases superfamily. Peptidase M19 family. Zn(2+) serves as cofactor.

It carries out the reaction an L-aminoacyl-L-amino acid + H2O = 2 an L-alpha-amino acid. Hydrolyzes a wide range of dipeptides. This Arthroderma benhamiae (strain ATCC MYA-4681 / CBS 112371) (Trichophyton mentagrophytes) protein is Putative dipeptidase ARB_02715.